The sequence spans 556 residues: Arginine--tRNA ligase (556 aa).

The 'HIGH' region signature appears at 132–142 (ANPTGDLHLGH).

The protein belongs to the class-I aminoacyl-tRNA synthetase family. In terms of assembly, monomer.

It is found in the cytoplasm. The catalysed reaction is tRNA(Arg) + L-arginine + ATP = L-arginyl-tRNA(Arg) + AMP + diphosphate. This is Arginine--tRNA ligase from Listeria monocytogenes serovar 1/2a (strain ATCC BAA-679 / EGD-e).